Here is a 532-residue protein sequence, read N- to C-terminus: Bifunctional purine biosynthesis protein PurH (532 aa).

Positions 1–147 (MAKIKRALIS…KNYRSVTVVT (147 aa)) constitute an MGS-like domain.

It belongs to the PurH family.

It carries out the reaction (6R)-10-formyltetrahydrofolate + 5-amino-1-(5-phospho-beta-D-ribosyl)imidazole-4-carboxamide = 5-formamido-1-(5-phospho-D-ribosyl)imidazole-4-carboxamide + (6S)-5,6,7,8-tetrahydrofolate. It catalyses the reaction IMP + H2O = 5-formamido-1-(5-phospho-D-ribosyl)imidazole-4-carboxamide. The protein operates within purine metabolism; IMP biosynthesis via de novo pathway; 5-formamido-1-(5-phospho-D-ribosyl)imidazole-4-carboxamide from 5-amino-1-(5-phospho-D-ribosyl)imidazole-4-carboxamide (10-formyl THF route): step 1/1. Its pathway is purine metabolism; IMP biosynthesis via de novo pathway; IMP from 5-formamido-1-(5-phospho-D-ribosyl)imidazole-4-carboxamide: step 1/1. The sequence is that of Bifunctional purine biosynthesis protein PurH from Magnetococcus marinus (strain ATCC BAA-1437 / JCM 17883 / MC-1).